Reading from the N-terminus, the 292-residue chain is 4-diphosphocytidyl-2-C-methyl-D-erythritol kinase (292 aa).

Residue Lys11 is part of the active site. 95-105 (PVSAGLAGGSS) lines the ATP pocket. Asp137 is an active-site residue.

The protein belongs to the GHMP kinase family. IspE subfamily.

The enzyme catalyses 4-CDP-2-C-methyl-D-erythritol + ATP = 4-CDP-2-C-methyl-D-erythritol 2-phosphate + ADP + H(+). The protein operates within isoprenoid biosynthesis; isopentenyl diphosphate biosynthesis via DXP pathway; isopentenyl diphosphate from 1-deoxy-D-xylulose 5-phosphate: step 3/6. Its function is as follows. Catalyzes the phosphorylation of the position 2 hydroxy group of 4-diphosphocytidyl-2C-methyl-D-erythritol. The protein is 4-diphosphocytidyl-2-C-methyl-D-erythritol kinase of Alkaliphilus oremlandii (strain OhILAs) (Clostridium oremlandii (strain OhILAs)).